We begin with the raw amino-acid sequence, 902 residues long: Desmocollin-2 (902 aa).

The first 27 residues, 1-27, serve as a signal peptide directing secretion; it reads MAAVGSMRSGSPAFGLGHLLTLAILAL. Positions 28–135 are excised as a propeptide; it reads ASDACKEVVL…TEKVLSRAKR (108 aa). Cadherin domains lie at 136–243, 244–355, 356–471, 472–579, and 580–694; these read RWAP…YPIF, TQKL…LPTF, TRTT…GPEC, IPPM…FIPK, and QTVV…RLGP. Topologically, residues 136 to 694 are extracellular; the sequence is RWAPIPCSML…TGYADVRLGP (559 aa). A glycan (N-linked (GlcNAc...) asparagine) is linked at Asn-166. N-linked (GlcNAc...) asparagine glycosylation is found at Asn-392, Asn-546, and Asn-629. The chain crosses the membrane as a helical span at residues 695-715; sequence WAILAILLGIALLFCILFTLV. The Cytoplasmic segment spans residues 716–902; sequence CSVSRASKQQ…RTLAEVCAKR (187 aa). A phosphoserine mark is found at Ser-865, Ser-869, and Ser-874.

As to quaternary structure, interacts with DSP, PKP2 and JUP. Interacts with DSG3; the interaction may limit the interaction of DSC3 with p38MAPK family members and therefore repress p38MAPK signaling activation. Expressed in intestinal epithelial cells (at protein level). Expressed in the heart. Expressed in tongue, bladder, stomach, liver, kidney, and lung.

The protein resides in the cell membrane. It is found in the cell junction. The protein localises to the desmosome. Its function is as follows. A component of desmosome cell-cell junctions which are required for positive regulation of cellular adhesion. Promotes timely incorporation of DSG2 into desmosome intercellular junctions and promotes interaction of desmosome cell junctions with intermediate filament cytokeratin, via modulation of DSP phosphorylation. Plays an important role in desmosome-mediated maintenance of intestinal epithelial cell intercellular adhesion strength and barrier function. Positively regulates wound healing of intestinal mucosa via promotion of epithelial cell migration, and also plays a role in mechanotransduction of force between intestinal epithelial cells and extracellular matrix. May contribute to epidermal cell positioning (stratification) by mediating differential adhesiveness between cells that express different isoforms. May promote p38MAPK signaling activation that facilitates keratinocyte migration. This Mus musculus (Mouse) protein is Desmocollin-2 (Dsc2).